We begin with the raw amino-acid sequence, 500 residues long: Cytochrome P450 monooxygenase 103 (500 aa).

2 consecutive transmembrane segments (helical) span residues 1–21 (MASTPLLYVLVIILSAVYLLR) and 26–46 (PLYAIPAVGPSLPLLSYIGAL). An N-linked (GlcNAc...) asparagine glycan is attached at N374. C441 is a heme binding site.

This sequence belongs to the cytochrome P450 family. The cofactor is heme.

Its subcellular location is the membrane. Its pathway is secondary metabolite biosynthesis. Functionally, cytochrome P450 monooxygenase that is able to use testosterone as a substrate for oxidation. The chain is Cytochrome P450 monooxygenase 103 from Postia placenta (strain ATCC 44394 / Madison 698-R) (Brown rot fungus).